Here is a 129-residue protein sequence, read N- to C-terminus: Large ribosomal subunit protein bL19 (129 aa).

Belongs to the bacterial ribosomal protein bL19 family.

This protein is located at the 30S-50S ribosomal subunit interface and may play a role in the structure and function of the aminoacyl-tRNA binding site. This is Large ribosomal subunit protein bL19 from Bordetella avium (strain 197N).